The following is a 391-amino-acid chain: uncharacterized protein (391 aa).

It belongs to the mycobacterial PPE family.

This is an uncharacterized protein from Mycobacterium tuberculosis (strain CDC 1551 / Oshkosh).